The primary structure comprises 906 residues: Protein translocase subunit SecA (906 aa).

ATP-binding positions include Q86, 104-108 (GEGKT), and D499. C890, C892, C901, and H902 together coordinate Zn(2+).

Belongs to the SecA family. As to quaternary structure, monomer and homodimer. Part of the essential Sec protein translocation apparatus which comprises SecA, SecYEG and auxiliary proteins SecDF-YajC and YidC. Zn(2+) serves as cofactor.

It localises to the cell inner membrane. The protein localises to the cytoplasm. It catalyses the reaction ATP + H2O + cellular proteinSide 1 = ADP + phosphate + cellular proteinSide 2.. In terms of biological role, part of the Sec protein translocase complex. Interacts with the SecYEG preprotein conducting channel. Has a central role in coupling the hydrolysis of ATP to the transfer of proteins into and across the cell membrane, serving both as a receptor for the preprotein-SecB complex and as an ATP-driven molecular motor driving the stepwise translocation of polypeptide chains across the membrane. This is Protein translocase subunit SecA from Rickettsia prowazekii (strain Madrid E).